We begin with the raw amino-acid sequence, 1610 residues long: Voltage-dependent L-type calcium channel subunit alpha-1D (1610 aa).

A disordered region spans residues 1 to 99 (MMMMMMKKMQ…SKKQGNSSNS (99 aa)). The Cytoplasmic segment spans residues 1–125 (MMMMMMKKMQ…RACISIVEWK (125 aa)). The span at 37–51 (GPTSQPNSSKQTVLS) shows a compositional bias: polar residues. Residues 53 to 66 (QAAIDAARQAKAAQ) are compositionally biased toward low complexity. Over residues 81–92 (QRKRQQYAKSKK) the composition is skewed to basic residues. One copy of the I repeat lies at 112-408 (NPIRRACISI…LVLGVLSGEF (297 aa)). A helical membrane pass occupies residues 126-144 (PFDIFILLAIFANCVALAI). Over 145–162 (YIPFPEDDSNSTNHNLEK) the chain is Extracellular. Residue N154 is glycosylated (N-linked (GlcNAc...) asparagine). The helical transmembrane segment at 163 to 182 (VEYAFLIIFTVETFLKIIAY) threads the bilayer. The Cytoplasmic segment spans residues 183 to 194 (GLLLHPNAYVRN). Residues 195–213 (GWNLLDFVIVIVGLFSVIL) traverse the membrane as a helical segment. The Extracellular portion of the chain corresponds to 214–234 (EQLTKETEGGNHSSGKSGGFD). N-linked (GlcNAc...) asparagine glycosylation is present at N224. A helical transmembrane segment spans residues 235–253 (VKALRAFRVLRPLRLVSGV). The Cytoplasmic segment spans residues 254-272 (PSLQVVLNSIIKAMVPLLH). The helical transmembrane segment at 273–292 (IALLVLFVIIIYAIIGLELF) threads the bilayer. Topologically, residues 293–380 (IGKMHKTCFF…WMNDAMGFEL (88 aa)) are extracellular. N328 carries an N-linked (GlcNAc...) asparagine glycan. Ca(2+) is bound at residue E363. A helical transmembrane segment spans residues 381–405 (PWVYFVSLVIFGSFFVLNLVLGVLS). The Cytoplasmic segment spans residues 406–522 (GEFSKEREKA…RRCRAAVKSV (117 aa)). The segment at 428–445 (EQLEEDLKGYLDWITQAE) is binding to the beta subunit. Residues 448 to 487 (DPENEEEGGEEGKRNTSMPTSETESVNTENVSGEGETQGS) form a disordered region. The segment covering 462-487 (NTSMPTSETESVNTENVSGEGETQGS) has biased composition (polar residues). The II repeat unit spans residues 508-754 (NRFNRRRCRA…VFLAIAVDNL (247 aa)). The chain crosses the membrane as a helical span at residues 523-542 (TFYWLVIVLVFLNTLTISSE). Residues 543 to 557 (HYNQPDWLTQIQDIA) are Extracellular-facing. A helical membrane pass occupies residues 558-576 (NKVLLALFTCEMLVKMYSL). Residues 577-584 (GLQAYFVS) lie on the Cytoplasmic side of the membrane. A helical transmembrane segment spans residues 585-603 (LFNRFDCFVVCGGITETIL). Residues 604-613 (VELELMSPLG) are Extracellular-facing. A helical membrane pass occupies residues 614 to 632 (VSVFRCVRLLRIFKVTRHW). Residues 633-651 (TSLSNLVASLLNSMKSIAS) lie on the Cytoplasmic side of the membrane. Residues 652–672 (LLLLLFLFIIIFSLLGMQLFG) traverse the membrane as a helical segment. Topologically, residues 673 to 726 (GKFNFDETQTKRSTFDNFPQALLTVFQILTGEDWNAVMYDGIMAYGGPSSSGMI) are extracellular. Residue E704 coordinates Ca(2+). A helical membrane pass occupies residues 727–751 (VCIYFIILFICGNYILLNVFLAIAV). Topologically, residues 752–884 (DNLADAESLN…VGCHKLINHH (133 aa)) are cytoplasmic. Residues 765–789 (KEEAEEKERKKIARKESLENKKNNK) show a composition bias toward basic and acidic residues. Positions 765-846 (KEEAEEKERK…VPAGPRPRRI (82 aa)) are disordered. Over residues 790-801 (PEVNQIANSDNK) the composition is skewed to polar residues. A compositionally biased stretch (acidic residues) spans 824–836 (VGEEEEEEEEEPE). The stretch at 871–1153 (NPIRVGCHKL…IFVGFVIVTF (283 aa)) is one III repeat. Residues 885–903 (IFTNLILVFIMLSSAALAA) traverse the membrane as a helical segment. Residues 904–919 (EDPIRSHSFRNTILGY) are Extracellular-facing. A helical transmembrane segment spans residues 920 to 939 (FDYAFTAIFTVEILLKMTTF). Topologically, residues 940–951 (GAFLHKGAFCRN) are cytoplasmic. A helical membrane pass occupies residues 952–970 (YFNLLDMLVVGVSLVSFGI). The Extracellular portion of the chain corresponds to 971-976 (QSSAIS). The chain crosses the membrane as a helical span at residues 977–996 (VVKILRVLRVLRPLRAINRA). The Cytoplasmic segment spans residues 997 to 1015 (KGLKHVVQCVFVAIRTIGN). A helical membrane pass occupies residues 1016–1035 (IMIVTTLLQFMFACIGVQLF). The Extracellular portion of the chain corresponds to 1036 to 1125 (KGKFYRCTDE…AGPVYNHRVE (90 aa)). The tract at residues 1073–1163 (RIWQNSDFNF…QEQGEKEYKN (91 aa)) is dihydropyridine binding. A Ca(2+)-binding site is contributed by E1099. A helical transmembrane segment spans residues 1126–1146 (ISIFFIIYIIIVAFFMMNIFV). The Cytoplasmic portion of the chain corresponds to 1147–1203 (GFVIVTFQEQGEKEYKNCELDKNQRQCVEYALKARPLRRYIPKNPYQYKFWYVVNSS). Residues 1190–1465 (NPYQYKFWYV…LFVAVIMDNF (276 aa)) form an IV repeat. A helical transmembrane segment spans residues 1204–1222 (PFEYMMFVLIMLNTLCLAM). At 1223 to 1237 (QHYEQSKMFNDAMDI) the chain is on the extracellular side. The helical transmembrane segment at 1238 to 1257 (LNMVFTGVFTVEMVLKVIAF) threads the bilayer. At 1258-1264 (KPKGYFS) the chain is on the cytoplasmic side. Residues 1265–1286 (DAWNTFDSLIVIGSIIDVALSE) traverse the membrane as a helical segment. Over 1287 to 1311 (ADPTESESLPLPTATPGNSEESNRI) the chain is Extracellular. The helical transmembrane segment at 1312–1331 (SITFFRLFRVMRLVKLLSRG) threads the bilayer. At 1332-1350 (EGIRTLLWTFIKSFQALPY) the chain is on the cytoplasmic side. Residues 1351–1370 (VALLIAMLFFIYAVIGMQMF) form a helical membrane-spanning segment. The Extracellular portion of the chain corresponds to 1371-1437 (GKVAMRDNNQ…GEEYTCGSNF (67 aa)). The segment at 1418–1484 (LCDPDSDYNP…LGPHHLDEFK (67 aa)) is dihydropyridine binding. The phenylalkylamine binding stretch occupies residues 1430–1473 (EYTCGSNFAIVYFISFYMLCAFLIINLFVAVIMDNFDYLTRDWS). Residues 1438 to 1462 (AIVYFISFYMLCAFLIINLFVAVIM) traverse the membrane as a helical segment. Over 1463 to 1610 (DNFDYLTRDW…CFLSPSRSRS (148 aa)) the chain is Cytoplasmic.

The protein belongs to the calcium channel alpha-1 subunit (TC 1.A.1.11) family. CACNA1D subfamily. In terms of assembly, voltage-dependent calcium channels are multisubunit complexes, consisting of alpha-1, alpha-2, beta and delta subunits in a 1:1:1:1 ratio. The channel activity is directed by the pore-forming and voltage-sensitive alpha-1 subunit. In many cases, this subunit is sufficient to generate voltage-sensitive calcium channel activity. The auxiliary subunits beta and alpha-2/delta linked by a disulfide bridge regulate the channel activity. Interacts with RIMBP2. Interacts with CABP1 and CABP4, resulting in a near elimination of calcium-dependent inactivation of the channel. In terms of tissue distribution, expressed in brain, heart and skeletal muscle.

The protein resides in the membrane. It carries out the reaction Ca(2+)(in) = Ca(2+)(out). In terms of biological role, voltage-sensitive calcium channels (VSCC) mediate the entry of calcium ions into excitable cells and are also involved in a variety of calcium-dependent processes, including muscle contraction, hormone or neurotransmitter release, gene expression, cell motility, cell division and cell death. The isoform alpha-1D gives rise to L-type calcium currents. Long-lasting (L-type) calcium channels belong to the 'high-voltage activated' (HVA) group. They are blocked by dihydropyridines (DHP), phenylalkylamines, and by benzothiazepines. The chain is Voltage-dependent L-type calcium channel subunit alpha-1D (CACNA1D) from Mesocricetus auratus (Golden hamster).